Here is a 275-residue protein sequence, read N- to C-terminus: MTSDLDTRLDLLRNITSKVGAFALARFGNLSHIVIETKGEADYVSAADRDAESLARRLIHAQFPADAIVGEEQLGDAEVDHWLIDPIDGTANFLSGIPLWAVSIAFVRNKEPVLGAVALPALDTLLWASVDGPLHGTGSVSPLVGAQPIAFGIGRNRTWPLAHRLEVEAAFEARGYHIVCLGSCAAALAMVAAGRLAGYVEHGTHLWDCAAGHVLCRAAGAPSSILFEADGKVAIIAAPQHLRVTAKADARSLSEKHIFDPGSDRISHRMESSAD.

Mg(2+) is bound by residues Glu-71, Asp-85, Ile-87, and Asp-88. Glu-71 lines the substrate pocket. Substrate is bound at residue 87–90; that stretch reads IDGT. The next 3 helical transmembrane spans lie at 87–107, 112–132, and 178–198; these read IDGT…IAFV, PVLG…SVDG, and IVCL…RLAG. A Mg(2+)-binding site is contributed by Asp-208. Asp-208 contacts substrate.

Belongs to the inositol monophosphatase superfamily.

Its subcellular location is the cell membrane. This is an uncharacterized protein from Sinorhizobium fredii (strain NBRC 101917 / NGR234).